The following is a 520-amino-acid chain: Signal peptide peptidase-like 2A (520 aa).

The N-terminal stretch at Met1 to Ala25 is a signal peptide. At Gln26 to Met172 the chain is on the lumenal side. 6 N-linked (GlcNAc...) asparagine glycosylation sites follow: Asn58, Asn66, Asn74, Asn116, Asn126, and Asn149. A PA domain is found at Ser63–Thr151. N-linked (GlcNAc...) (complex) asparagine glycosylation is present at Asn155. A helical transmembrane segment spans residues Val173–Val193. Topologically, residues Glu194–Pro220 are cytoplasmic. The helical transmembrane segment at Leu221–Tyr241 threads the bilayer. At Lys242–Val247 the chain is on the lumenal side. A helical membrane pass occupies residues Met248 to Ile268. Topologically, residues His269 to Met285 are cytoplasmic. A helical membrane pass occupies residues Glu286–Phe306. Residues Arg307–Arg311 are Lumenal-facing. The chain crosses the membrane as a helical span at residues Trp312–Leu332. Topologically, residues Lys333–Cys340 are cytoplasmic. The helical transmembrane segment at Val341 to Ile361 threads the bilayer. Residue Asp351 is part of the active site. Residues Thr362–Ser399 lie on the Lumenal side of the membrane. A helical membrane pass occupies residues Val400–Ile420. Asp412 is an active-site residue. At Ala421–Tyr437 the chain is on the cytoplasmic side. The chain crosses the membrane as a helical span at residues Val438–Met458. The Lumenal segment spans residues Lys459–Lys460. A helical transmembrane segment spans residues Gly461–Trp481. The short motif at Pro463–Leu465 is the PAL element. Over Arg482–Gln520 the chain is Cytoplasmic. The short motif at Tyr495–Met498 is the YXXo lysosomal targeting motif element.

This sequence belongs to the peptidase A22B family. As to quaternary structure, interacts with ITM2B. Glycosylated. In terms of tissue distribution, ubiquitous.

The protein localises to the late endosome membrane. It is found in the lysosome membrane. The protein resides in the membrane. Intramembrane-cleaving aspartic protease (I-CLiP) that cleaves type II membrane signal peptides in the hydrophobic plane of the membrane. Functions in FASLG, ITM2B and TNF processing. Catalyzes the intramembrane cleavage of the anchored fragment of shed TNF-alpha (TNF), which promotes the release of the intracellular domain (ICD) for signaling to the nucleus. Also responsible for the intramembrane cleavage of Fas antigen ligand FASLG, which promotes the release of the intracellular FasL domain (FasL ICD). Essential for degradation of the invariant chain CD74 that plays a central role in the function of antigen-presenting cells in the immune system. Plays a role in the regulation of innate and adaptive immunity. Catalyzes the intramembrane cleavage of the simian foamy virus envelope glycoprotein gp130 independently of prior ectodomain shedding by furin or furin-like proprotein convertase (PC)-mediated cleavage proteolysis. The polypeptide is Signal peptide peptidase-like 2A (Homo sapiens (Human)).